The chain runs to 151 residues: UPF0735 ACT domain-containing protein SERP1207 (151 aa).

Residues 74–149 form the ACT domain; the sequence is TLILYVNDIV…HVTKVDLISM (76 aa).

The protein belongs to the UPF0735 family.

The sequence is that of UPF0735 ACT domain-containing protein SERP1207 from Staphylococcus epidermidis (strain ATCC 35984 / DSM 28319 / BCRC 17069 / CCUG 31568 / BM 3577 / RP62A).